Consider the following 806-residue polypeptide: Acetyl-CoA decarbonylase/synthase complex subunit alpha 1 (806 aa).

C73, C76, C77, C79, C84, and C94 together coordinate [4Fe-4S] cluster. H117 provides a ligand contact to CO. The [Ni-4Fe-4S] cluster site is built by H250, C278, and C323. 4Fe-4S ferredoxin-type domains follow at residues D407–A436 and S446–I475. 8 residues coordinate [4Fe-4S] cluster: C417, C420, C423, C427, C455, C458, C461, and C465. C523, C552, and C587 together coordinate [Ni-4Fe-4S] cluster.

Belongs to the Ni-containing carbon monoxide dehydrogenase family. As to quaternary structure, heterotetramer of two alpha and two epsilon subunits. The ACDS complex is made up of alpha, epsilon, beta, gamma and delta subunits with a probable stoichiometry of (alpha(2)epsilon(2))(4)-beta(8)-(gamma(1)delta(1))(8). [4Fe-4S] cluster is required as a cofactor. The cofactor is [Ni-4Fe-4S] cluster.

It carries out the reaction CO + 2 oxidized [2Fe-2S]-[ferredoxin] + H2O = 2 reduced [2Fe-2S]-[ferredoxin] + CO2 + 2 H(+). The protein operates within one-carbon metabolism; methanogenesis from acetate. Functionally, part of the ACDS complex that catalyzes the reversible cleavage of acetyl-CoA, allowing growth on acetate as sole source of carbon and energy. The alpha-epsilon subcomponent functions as a carbon monoxide dehydrogenase. In Methanosarcina acetivorans (strain ATCC 35395 / DSM 2834 / JCM 12185 / C2A), this protein is Acetyl-CoA decarbonylase/synthase complex subunit alpha 1.